The sequence spans 130 residues: Small ribosomal subunit protein uS9 (130 aa).

The protein belongs to the universal ribosomal protein uS9 family.

The chain is Small ribosomal subunit protein uS9 from Pectobacterium atrosepticum (strain SCRI 1043 / ATCC BAA-672) (Erwinia carotovora subsp. atroseptica).